Here is a 92-residue protein sequence, read N- to C-terminus: Small ribosomal subunit protein bS20 (92 aa).

The protein belongs to the bacterial ribosomal protein bS20 family.

In terms of biological role, binds directly to 16S ribosomal RNA. The protein is Small ribosomal subunit protein bS20 of Thermosipho africanus (strain TCF52B).